The following is a 184-amino-acid chain: Mitochondrial import inner membrane translocase subunit Tim22 (184 aa).

2 disulfide bridges follow: cysteine 59–cysteine 131 and cysteine 150–cysteine 169. Transmembrane regions (helical) follow at residues 64 to 84 (ALACVGGFVLGGAFGVFTAGI), 115 to 133 (YAKNFAIVGAMFSCTECLV), and 160 to 180 (AGLKAGVLGCGGFAAFSAVID).

It belongs to the Tim17/Tim22/Tim23 family. In terms of assembly, core component of the TIM22 complex.

Its subcellular location is the mitochondrion inner membrane. In terms of biological role, essential core component of the TIM22 complex, a complex that mediates the import and insertion of multi-pass transmembrane proteins into the mitochondrial inner membrane. In the TIM22 complex, it constitutes the voltage-activated and signal-gated channel. Forms a twin-pore translocase that uses the membrane potential as external driving force in 2 voltage-dependent steps. The protein is Mitochondrial import inner membrane translocase subunit Tim22 (timm22) of Xenopus laevis (African clawed frog).